Here is a 183-residue protein sequence, read N- to C-terminus: Glutathione-regulated potassium-efflux system ancillary protein KefG (183 aa).

It belongs to the NAD(P)H dehydrogenase (quinone) family. KefG subfamily. Interacts with KefB.

Its subcellular location is the cell inner membrane. The catalysed reaction is a quinone + NADH + H(+) = a quinol + NAD(+). It carries out the reaction a quinone + NADPH + H(+) = a quinol + NADP(+). Functionally, regulatory subunit of a potassium efflux system that confers protection against electrophiles. Required for full activity of KefB. The polypeptide is Glutathione-regulated potassium-efflux system ancillary protein KefG (Escherichia coli O6:K15:H31 (strain 536 / UPEC)).